The following is a 153-amino-acid chain: Putative phosphatidylglycerol/phosphatidylinositol transfer protein DDB_G0285639 (153 aa).

The first 21 residues, Met-1–Gly-21, serve as a signal peptide directing secretion. Residues Asn-17, Asn-61, Asn-87, Asn-117, and Asn-140 are each glycosylated (N-linked (GlcNAc...) asparagine).

It belongs to the NPC2 family. In terms of assembly, monomer.

Functionally, catalyzes the intermembrane transfer of phosphatidylglycerol and phosphatidylinositol. This Dictyostelium discoideum (Social amoeba) protein is Putative phosphatidylglycerol/phosphatidylinositol transfer protein DDB_G0285639.